Consider the following 355-residue polypeptide: Probable butyrate kinase (355 aa).

Belongs to the acetokinase family.

The protein localises to the cytoplasm. The enzyme catalyses butanoate + ATP = butanoyl phosphate + ADP. The protein is Probable butyrate kinase of Listeria monocytogenes serotype 4a (strain HCC23).